We begin with the raw amino-acid sequence, 561 residues long: Putative transport protein YbjL (561 aa).

5 helical membrane-spanning segments follow: residues 8–28 (LLNG…LCLG), 32–52 (LGSI…LLGQ), 66–86 (FMLF…SIFF), 94–114 (MLAL…GKLF), and 158–178 (NLSL…IVGA). 2 RCK C-terminal domains span residues 200-288 (RGLD…SFRN) and 292-373 (VFDR…RIGF). 5 consecutive transmembrane segments (helical) span residues 383 to 403 (LLAF…TFQF), 406 to 426 (FSFG…LGFM), 451 to 471 (VFMA…LGAI), 475 to 495 (MLIA…LFGA), and 540 to 560 (AIAN…WPGL).

Belongs to the AAE transporter (TC 2.A.81) family. YbjL subfamily.

The protein localises to the cell membrane. This Escherichia coli O139:H28 (strain E24377A / ETEC) protein is Putative transport protein YbjL.